The primary structure comprises 25 residues: Antimicrobial peptide scolopin-2 (25 aa).

As to expression, expressed by the venom gland.

Its subcellular location is the secreted. Its function is as follows. Antimicrobial peptide against both Gram-positive, -negative and yeast. Also induces histamine release by mast cells and shows moderate hemolytic activities against both human and rabbit red cells. The sequence is that of Antimicrobial peptide scolopin-2 from Scolopendra mutilans (Chinese red-headed centipede).